We begin with the raw amino-acid sequence, 232 residues long: uncharacterized protein (232 aa).

The signal sequence occupies residues 1 to 32 (MTTSKIATAFKTATFALAAGAVALGLASPADA).

This is an uncharacterized protein from Mycobacterium bovis (strain ATCC BAA-935 / AF2122/97).